Here is a 476-residue protein sequence, read N- to C-terminus: Glutamate--tRNA ligase (476 aa).

The 'HIGH' region motif lies at 9-19 (PSPTGTLHLGT). A 'KMSKS' region motif is present at residues 248-252 (KLSKR). Lys-251 contributes to the ATP binding site.

Belongs to the class-I aminoacyl-tRNA synthetase family. Glutamate--tRNA ligase type 1 subfamily. In terms of assembly, monomer.

It localises to the cytoplasm. The enzyme catalyses tRNA(Glu) + L-glutamate + ATP = L-glutamyl-tRNA(Glu) + AMP + diphosphate. Catalyzes the attachment of glutamate to tRNA(Glu) in a two-step reaction: glutamate is first activated by ATP to form Glu-AMP and then transferred to the acceptor end of tRNA(Glu). The polypeptide is Glutamate--tRNA ligase (Prochlorococcus marinus (strain NATL1A)).